The sequence spans 278 residues: Small ribosomal subunit protein uS2 (278 aa).

The segment at 235 to 278 (AEAAEEAPKRERKAKAAVKKERTKKEDDDALNANVAGKFAKDEE) is disordered. Over residues 252-261 (VKKERTKKED) the composition is skewed to basic and acidic residues.

Belongs to the universal ribosomal protein uS2 family.

The polypeptide is Small ribosomal subunit protein uS2 (Parabacteroides distasonis (strain ATCC 8503 / DSM 20701 / CIP 104284 / JCM 5825 / NCTC 11152)).